The chain runs to 101 residues: MAKSSMKAREAKRAKLVAKFAEKRLALKAIINNPTTSDEDRWDAVLKLQGLPRDSSAARQRNRCSQTGRPHGYLRKFGLSRIKLREATMRGEVPGLRKASW.

The protein belongs to the universal ribosomal protein uS14 family. Part of the 30S ribosomal subunit. Contacts proteins S3 and S10.

Its function is as follows. Binds 16S rRNA, required for the assembly of 30S particles and may also be responsible for determining the conformation of the 16S rRNA at the A site. The protein is Small ribosomal subunit protein uS14 of Shewanella sediminis (strain HAW-EB3).